The sequence spans 700 residues: Methionine--tRNA ligase (700 aa).

The 'HIGH' region motif lies at 13 to 23 (PYANGDIHLGH). Positions 144, 147, 157, and 160 each coordinate Zn(2+). The short motif at 341–345 (KMSKS) is the 'KMSKS' region element. Lys344 is a binding site for ATP. Residues 598-700 (DFAKVEMKVA…DNCVIGDLLA (103 aa)) enclose the tRNA-binding domain.

The protein belongs to the class-I aminoacyl-tRNA synthetase family. MetG type 1 subfamily. In terms of assembly, homodimer. Zn(2+) serves as cofactor.

The protein localises to the cytoplasm. It carries out the reaction tRNA(Met) + L-methionine + ATP = L-methionyl-tRNA(Met) + AMP + diphosphate. Its function is as follows. Is required not only for elongation of protein synthesis but also for the initiation of all mRNA translation through initiator tRNA(fMet) aminoacylation. The polypeptide is Methionine--tRNA ligase (Psychrobacter arcticus (strain DSM 17307 / VKM B-2377 / 273-4)).